Here is a 220-residue protein sequence, read N- to C-terminus: Acetate CoA-transferase subunit alpha (220 aa).

24–30 (GGFMGIG) is a binding site for CoA.

The protein belongs to the 3-oxoacid CoA-transferase subunit A family. In terms of assembly, heterotetramer composed of two alpha subunits (AtoD) and two beta subunits (AtoA).

Its subcellular location is the cytoplasm. The enzyme catalyses an acyl-CoA + acetate = a carboxylate + acetyl-CoA. The catalysed reaction is acetoacetate + acetyl-CoA = acetoacetyl-CoA + acetate. It catalyses the reaction butanoate + acetyl-CoA = butanoyl-CoA + acetate. It carries out the reaction acetoacetate + butanoyl-CoA = acetoacetyl-CoA + butanoate. It functions in the pathway lipid metabolism; short-chain fatty acid metabolism. Its activity is regulated as follows. Inhibited by p-chloromercuribenzoate. Functionally, coenzyme A transferase which is involved in short-chain fatty acid degradation and catalyzes the activation of short-chain fatty acids to their respective CoA thiolesters. During acetoacetate degradation, catalyzes the transfer of CoA from acetyl-CoA to acetoacetate by a mechanism involving a covalent enzyme-CoA compound as a reaction intermediate. Utilizes a variety of short chain acyl-CoA and carboxylic acid substrates but exhibits maximal activity with normal and 3-keto substrates. This chain is Acetate CoA-transferase subunit alpha, found in Escherichia coli (strain K12).